The following is a 385-amino-acid chain: Deoxyhypusine synthase (385 aa).

NAD(+) is bound by residues 108 to 112, 134 to 136, Glu-140, and Asp-257; these read SNLIS and TAG. 139-140 contacts spermidine; it reads EE. A spermidine-binding site is contributed by Asp-262. Position 304 (Gly-304) interacts with NAD(+). Residue His-309 coordinates spermidine. Position 329–330 (329–330) interacts with NAD(+); that stretch reads TG. Spermidine contacts are provided by residues 335 to 337 and 344 to 350; these read GSD and EAVSWGK. Lys-350 (nucleophile) is an active-site residue. 363 to 364 serves as a coordination point for NAD(+); it reads DV.

This sequence belongs to the deoxyhypusine synthase family. It depends on NAD(+) as a cofactor.

It catalyses the reaction [eIF5A protein]-L-lysine + spermidine = [eIF5A protein]-deoxyhypusine + propane-1,3-diamine. Its pathway is protein modification; eIF5A hypusination. In terms of biological role, catalyzes the NAD-dependent oxidative cleavage of spermidine and the subsequent transfer of the butylamine moiety of spermidine to the epsilon-amino group of a specific lysine residue of the eIF-5A precursor protein to form the intermediate deoxyhypusine residue. The polypeptide is Deoxyhypusine synthase (DYS1) (Candida glabrata (strain ATCC 2001 / BCRC 20586 / JCM 3761 / NBRC 0622 / NRRL Y-65 / CBS 138) (Yeast)).